The primary structure comprises 361 residues: Phospho-N-acetylmuramoyl-pentapeptide-transferase (361 aa).

10 helical membrane passes run 26 to 46, 73 to 93, 97 to 117, 134 to 154, 168 to 188, 200 to 220, 237 to 257, 264 to 284, 289 to 309, and 340 to 360; these read AILG…VMIR, TMGG…WADL, YVWV…VDDY, YFWQ…TASM, VSLT…IVGS, GLAI…AYLS, TGEL…FLWF, VFMG…VAVI, IVLF…ILQV, and IVRF…SLKI.

Belongs to the glycosyltransferase 4 family. MraY subfamily. It depends on Mg(2+) as a cofactor.

Its subcellular location is the cell inner membrane. The catalysed reaction is UDP-N-acetyl-alpha-D-muramoyl-L-alanyl-gamma-D-glutamyl-meso-2,6-diaminopimeloyl-D-alanyl-D-alanine + di-trans,octa-cis-undecaprenyl phosphate = di-trans,octa-cis-undecaprenyl diphospho-N-acetyl-alpha-D-muramoyl-L-alanyl-D-glutamyl-meso-2,6-diaminopimeloyl-D-alanyl-D-alanine + UMP. Its pathway is cell wall biogenesis; peptidoglycan biosynthesis. Functionally, catalyzes the initial step of the lipid cycle reactions in the biosynthesis of the cell wall peptidoglycan: transfers peptidoglycan precursor phospho-MurNAc-pentapeptide from UDP-MurNAc-pentapeptide onto the lipid carrier undecaprenyl phosphate, yielding undecaprenyl-pyrophosphoryl-MurNAc-pentapeptide, known as lipid I. In Marinobacter nauticus (strain ATCC 700491 / DSM 11845 / VT8) (Marinobacter aquaeolei), this protein is Phospho-N-acetylmuramoyl-pentapeptide-transferase.